Consider the following 202-residue polypeptide: NADH-quinone oxidoreductase subunit C (202 aa).

The protein belongs to the complex I 30 kDa subunit family. As to quaternary structure, NDH-1 is composed of 14 different subunits. Subunits NuoB, C, D, E, F, and G constitute the peripheral sector of the complex.

The protein localises to the cell inner membrane. The catalysed reaction is a quinone + NADH + 5 H(+)(in) = a quinol + NAD(+) + 4 H(+)(out). Its function is as follows. NDH-1 shuttles electrons from NADH, via FMN and iron-sulfur (Fe-S) centers, to quinones in the respiratory chain. The immediate electron acceptor for the enzyme in this species is believed to be ubiquinone. Couples the redox reaction to proton translocation (for every two electrons transferred, four hydrogen ions are translocated across the cytoplasmic membrane), and thus conserves the redox energy in a proton gradient. The polypeptide is NADH-quinone oxidoreductase subunit C (Bartonella quintana (strain Toulouse) (Rochalimaea quintana)).